The following is a 151-amino-acid chain: Salivary C-type lectin 2 (151 aa).

Residues 1-15 (MKLLLSFALLGLVAC) form the signal peptide. In terms of domain architecture, C-type lectin spans 25 to 147 (YCFPNEVATW…CTSKRRFVCE (123 aa)). 2 cysteine pairs are disulfide-bonded: C41/C146 and C118/C138.

Ca(2+) serves as cofactor. As to expression, expressed in female salivary gland. Not detected or low-level expression in female midgut and fat body.

Its subcellular location is the secreted. Salivary protein with carbohydrate-binding activity. Binds to D-mannose, D-galactose, D-glucose and maltose. Agglutinates host erythrocytes. Probably participates in mosquito innate immune responses to prevent microorganism multiplication in sugar and blood meals. In terms of biological role, (Microbial infection) Binds to the surface of and agglutinates Escherichia coli in vitro. Functionally, (Microbial infection) Binds to the surface of and agglutinates Pseudomonas aeruginosa in vitro. Its function is as follows. (Microbial infection) Binds to the surface of and agglutinates Bacillus subtilis in vitro. (Microbial infection) Agglutinates Staphylococcus aureus in vitro. In terms of biological role, (Microbial infection) Agglutinates Candida albicans in vitro. Functionally, (Microbial infection) Does not affect replication of dengue virus type 2 in host cells. This is Salivary C-type lectin 2 from Aedes albopictus (Asian tiger mosquito).